The following is a 51-amino-acid chain: Large ribosomal subunit protein eL39 (51 aa).

This sequence belongs to the eukaryotic ribosomal protein eL39 family.

This Saccharolobus islandicus (strain L.S.2.15 / Lassen #1) (Sulfolobus islandicus) protein is Large ribosomal subunit protein eL39.